The sequence spans 313 residues: E3 ubiquitin-protein ligase SINA-like 2 (313 aa).

Residues 1–26 (MSGEASTSRRKRQRVPSSVESVENGG) form a disordered region. Residues 44–80 (CPICCHALTSPIFQCDNGHIACSSCCTKLRNKCPSCA) form an RING-type zinc finger. Residues 94–277 (VVEAVMVTCP…LKMEICIRKL (184 aa)) form an SBD region. Residues 97 to 155 (AVMVTCPNVKHGCTEKFSYGKELIHEKDCRFALCYCPAPNCNYSGVYKDLYSHFYVNHY) form an SIAH-type zinc finger. Positions 102, 109, 121, 125, 132, 137, 149, and 154 each coordinate Zn(2+). Residues 278-313 (KKDEEEADEDEESEEEEDDDDDDDDDDEEEDADEEE) are disordered. The span at 282–313 (EEADEDEESEEEEDDDDDDDDDDEEEDADEEE) shows a compositional bias: acidic residues.

Belongs to the SINA (Seven in absentia) family.

It carries out the reaction S-ubiquitinyl-[E2 ubiquitin-conjugating enzyme]-L-cysteine + [acceptor protein]-L-lysine = [E2 ubiquitin-conjugating enzyme]-L-cysteine + N(6)-ubiquitinyl-[acceptor protein]-L-lysine.. It participates in protein modification; protein ubiquitination. Its function is as follows. E3 ubiquitin-protein ligase that mediates ubiquitination and subsequent proteasomal degradation of target proteins. E3 ubiquitin ligases accept ubiquitin from an E2 ubiquitin-conjugating enzyme in the form of a thioester and then directly transfers the ubiquitin to targeted substrates. It probably triggers the ubiquitin-mediated degradation of different substrates. In Arabidopsis thaliana (Mouse-ear cress), this protein is E3 ubiquitin-protein ligase SINA-like 2.